A 253-amino-acid chain; its full sequence is uncharacterized protein (253 aa).

Positions 1-25 are cleaved as a signal peptide; sequence MRKKKFLSKVSFGSLFLLCGTVLSA. A lipid anchor (N-palmitoyl cysteine) is attached at C26. The S-diacylglycerol cysteine moiety is linked to residue C26.

The protein belongs to the MG439/MG440 family.

The protein resides in the cell membrane. This is an uncharacterized protein from Mycoplasma pneumoniae (strain ATCC 29342 / M129 / Subtype 1) (Mycoplasmoides pneumoniae).